A 144-amino-acid polypeptide reads, in one-letter code: Alpha-crystallin (144 aa).

Residues 33–143 (PTFDTRLMRL…TEKHIQIRST (111 aa)) enclose the sHSP domain.

The protein belongs to the small heat shock protein (HSP20) family.

It is found in the secreted. The protein localises to the cell wall. Its subcellular location is the cytoplasm. Functionally, acts as a chaperone. This is Alpha-crystallin (hspX) from Mycobacterium bovis (strain ATCC BAA-935 / AF2122/97).